A 194-amino-acid chain; its full sequence is RNA polymerase II subunit A C-terminal domain phosphatase SSU72 like protein 4 (194 aa).

Belongs to the SSU72 phosphatase family.

The protein localises to the nucleus. The catalysed reaction is O-phospho-L-seryl-[protein] + H2O = L-seryl-[protein] + phosphate. The enzyme catalyses O-phospho-L-threonyl-[protein] + H2O = L-threonyl-[protein] + phosphate. Protein phosphatase that catalyzes the dephosphorylation of the C-terminal domain of RNA polymerase II. Plays a role in RNA processing and termination. The polypeptide is RNA polymerase II subunit A C-terminal domain phosphatase SSU72 like protein 4 (Homo sapiens (Human)).